A 361-amino-acid polypeptide reads, in one-letter code: Mannose-1-phosphate guanyltransferase 2 (361 aa).

The protein belongs to the transferase hexapeptide repeat family.

Its subcellular location is the cytoplasm. The catalysed reaction is alpha-D-mannose 1-phosphate + GTP + H(+) = GDP-alpha-D-mannose + diphosphate. It participates in nucleotide-sugar biosynthesis; GDP-alpha-D-mannose biosynthesis; GDP-alpha-D-mannose from alpha-D-mannose 1-phosphate (GTP route): step 1/1. Involved in cell wall synthesis where it is required for glycosylation. Involved in cell cycle progression through cell-size checkpoint. The chain is Mannose-1-phosphate guanyltransferase 2 (MPG1) from Candida glabrata (strain ATCC 2001 / BCRC 20586 / JCM 3761 / NBRC 0622 / NRRL Y-65 / CBS 138) (Yeast).